A 649-amino-acid polypeptide reads, in one-letter code: WEB family protein At5g55860 (649 aa).

Coiled coils occupy residues 59-227 (EKVL…ACSQ), 267-356 (EFAK…IESV), and 391-461 (TINQ…MSEK). Residues 443-453 (EAKAAETKALE) show a composition bias toward basic and acidic residues. Positions 443–483 (EAKAAETKALEQIKSMSEKTNAARNSTSSESGSQSITLSQE) are disordered. Over residues 456-467 (KSMSEKTNAARN) the composition is skewed to polar residues. Positions 468–482 (STSSESGSQSITLSQ) are enriched in low complexity. A coiled-coil region spans residues 505 to 549 (AALAQVEAVRASENETLKKLETTQEEIKKLKTATEEALKKAAMAD). The disordered stretch occupies residues 583-611 (MKMASESSPQQHYKAPKQKPVNNKLEKTK).

It belongs to the WEB family.

The sequence is that of WEB family protein At5g55860 from Arabidopsis thaliana (Mouse-ear cress).